Reading from the N-terminus, the 699-residue chain is tRNA(Met) cytidine acetyltransferase TmcA (699 aa).

ATP-binding positions include Gln-178, Gly-200–Met-209, and Arg-322. The N-acetyltransferase domain maps to Met-408–Leu-547. Residues Ile-475–Val-477 and Arg-482–Arg-488 contribute to the acetyl-CoA site.

The protein belongs to the RNA cytidine acetyltransferase family. TmcA subfamily.

It is found in the cytoplasm. The catalysed reaction is cytidine(34) in elongator tRNA(Met) + acetyl-CoA + ATP + H2O = N(4)-acetylcytidine(34) in elongator tRNA(Met) + ADP + phosphate + CoA + H(+). Functionally, catalyzes the formation of N(4)-acetylcytidine (ac(4)C) at the wobble position of tRNA(Met), by using acetyl-CoA as an acetyl donor and ATP (or GTP). This is tRNA(Met) cytidine acetyltransferase TmcA from Pectobacterium atrosepticum (strain SCRI 1043 / ATCC BAA-672) (Erwinia carotovora subsp. atroseptica).